Consider the following 155-residue polypeptide: Ribosomal RNA large subunit methyltransferase H (155 aa).

Residue G103 coordinates S-adenosyl-L-methionine.

The protein belongs to the RNA methyltransferase RlmH family. As to quaternary structure, homodimer.

Its subcellular location is the cytoplasm. The catalysed reaction is pseudouridine(1915) in 23S rRNA + S-adenosyl-L-methionine = N(3)-methylpseudouridine(1915) in 23S rRNA + S-adenosyl-L-homocysteine + H(+). Specifically methylates the pseudouridine at position 1915 (m3Psi1915) in 23S rRNA. This Caulobacter vibrioides (strain ATCC 19089 / CIP 103742 / CB 15) (Caulobacter crescentus) protein is Ribosomal RNA large subunit methyltransferase H.